The chain runs to 442 residues: Putative mannan endo-1,6-alpha-mannosidase C970.02 (442 aa).

The first 19 residues, M1 to A19, serve as a signal peptide directing secretion. N-linked (GlcNAc...) asparagine glycans are attached at residues N25, N82, N107, N131, N201, N236, N261, N264, N277, and N361.

This sequence belongs to the glycosyl hydrolase 76 family.

It carries out the reaction Random hydrolysis of (1-&gt;6)-alpha-D-mannosidic linkages in unbranched (1-&gt;6)-mannans.. The protein is Putative mannan endo-1,6-alpha-mannosidase C970.02 of Schizosaccharomyces pombe (strain 972 / ATCC 24843) (Fission yeast).